We begin with the raw amino-acid sequence, 229 residues long: Large ribosomal subunit protein uL1 (229 aa).

This sequence belongs to the universal ribosomal protein uL1 family. Part of the 50S ribosomal subunit.

Binds directly to 23S rRNA. The L1 stalk is quite mobile in the ribosome, and is involved in E site tRNA release. Functionally, protein L1 is also a translational repressor protein, it controls the translation of the L11 operon by binding to its mRNA. This is Large ribosomal subunit protein uL1 from Haemophilus influenzae (strain 86-028NP).